Here is a 1266-residue protein sequence, read N- to C-terminus: SUMO-interacting motif-containing protein 1 (1266 aa).

The tract at residues 1-35 (MEDFIVISDDSGSESSAGTRSGRARRLRRALSRTP) is disordered. Over residues 22-31 (GRARRLRRAL) the composition is skewed to basic residues. An SUMO interaction motif 1 (SIM); mediates the binding to polysumoylated substrates motif is present at residues 45-49 (FIDLT). Residues 64–68 (VIDLT) carry the SUMO interaction motif 2 (SIM); mediates the binding to polysumoylated substrates motif. Composition is skewed to low complexity over residues 183–197 (SPFSSTSNNSSSSSN) and 532–553 (SSGGVTQSSGGVIQSSSGVPQS). 4 disordered regions span residues 183–206 (SPFSSTSNNSSSSSNQRTSLPCPQ), 532–732 (SSGG…SGDV), 756–812 (NRHS…PGSA), and 1024–1052 (LTPPQDETQTSPGPGVLKTSSDHLSPQPN). Residues 560 to 571 (SPGSVSQSSGDV) are compositionally biased toward polar residues. A compositionally biased stretch (low complexity) spans 764-777 (SAPSSPSCSANPLS). An interaction with SLF2 region spans residues 779-1266 (QSEFSSEKRP…NPDTEPASER (488 aa)). The tract at residues 857–1266 (SKGQKLEPIP…NPDTEPASER (410 aa)) is required for inhibition of CAPN3 protease activity. Positions 865–1200 (IPHRRLRMVT…IDRKDLIIKR (336 aa)) are NSE5-like domain.

Forms a heterodimer with SLF2. Interacts (via SIM domains) with SUMO1 and SUMO2. Interacts with CAPN3 and CTBP1. Interacts with SMC6 and ZNF451.

It is found in the nucleus. It localises to the PML body. Its function is as follows. Inhibits the protease activity of CAPN3. May play a role in SMC5-SMC6 complex recruitment for viral restriction. Forms a complex with SLF2 and this complex is required to recruit SMC5-SMC6 complex to PML nuclear bodies and sites of viral replication. In Rattus norvegicus (Rat), this protein is SUMO-interacting motif-containing protein 1 (Simc1).